Reading from the N-terminus, the 388-residue chain is Granulocyte-macrophage colony-stimulating factor receptor subunit alpha (388 aa).

A signal peptide spans 1 to 29; it reads MTSSHAMNITPLAQLALLFSTLLLPGTQA. Residues 30–327 lie on the Extracellular side of the membrane; the sequence is LLAPTTPDAG…PLEAEDTRVP (298 aa). Asn-43, Asn-63, Asn-106, Asn-132, Asn-165, and Asn-237 each carry an N-linked (GlcNAc...) asparagine glycan. A Fibronectin type-III domain is found at 228-324; the sequence is PPRDVTASCN…PAHPLEAEDT (97 aa). The WSXWS motif motif lies at 310 to 314; that stretch reads WGEWS. The chain crosses the membrane as a helical span at residues 328 to 348; the sequence is GALLYAVTACAVLLCALALGV. Residues 349–388 are Cytoplasmic-facing; the sequence is TCRRFEVTRRLFPPIPGIRDKVSDDVRVNPETLRKDLLQP. The short motif at 359–367 is the Box 1 motif element; the sequence is LFPPIPGIR.

It belongs to the type I cytokine receptor family. Type 5 subfamily. Heterodimer of an alpha and a beta subunit. The beta subunit is common to the IL3, IL5 and GM-CSF receptors. The signaling GM-CSF receptor complex is a dodecamer of two head-to-head hexamers of two alpha, two beta, and two ligand subunits.

It is found in the membrane. Its function is as follows. Low affinity receptor for granulocyte-macrophage colony-stimulating factor. Transduces a signal that results in the proliferation, differentiation, and functional activation of hematopoietic cells. The protein is Granulocyte-macrophage colony-stimulating factor receptor subunit alpha (Csf2ra) of Mus musculus (Mouse).